We begin with the raw amino-acid sequence, 561 residues long: Melanopsin-A (561 aa).

Residues 1-34 (MRPSTDTMEADTAATHRNFITKVDVPDHAHYTVA) lie on the Extracellular side of the membrane. The helical transmembrane segment at 35-55 (FFVSVIGTLGVTGNALVQFAF) threads the bilayer. At 56–68 (YSNKKLRNLPNYF) the chain is on the cytoplasmic side. A helical membrane pass occupies residues 69–89 (IMNQAASDFLMAFTQSPFFFI). Topologically, residues 90–104 (NCLNREWIFGELGCK) are extracellular. C103 and C181 are disulfide-bonded. Residues 105-125 (LYAFLGALFGITSMINLLAIS) traverse the membrane as a helical segment. Residues 126–148 (LDRYMVITRPLEAMKWNSKRRTT) are Cytoplasmic-facing. A helical transmembrane segment spans residues 149 to 169 (IAILLVWLYSLAWSLAPLVGW). Residues 170–201 (SSYIPEGLRTSCTWDYVTYTASNRSYTMMLCC) are Extracellular-facing. N-linked (GlcNAc...) asparagine glycosylation is present at N192. Residues 202–222 (FVFFIPLAIISYCYLFMFLAI) traverse the membrane as a helical segment. The Cytoplasmic portion of the chain corresponds to 223-255 (RKTSRDVERLGIQVRKSTIIRQKSIRTEWKLAK). A helical membrane pass occupies residues 256-276 (IAFVVIVVYVLSWSPYACVTM). The Extracellular segment spans residues 277–291 (ISWSGHANILSPYSK). Residues 292-312 (TVPAVIAKASTIYNPFIYAII) form a helical membrane-spanning segment. K299 bears the N6-(retinylidene)lysine mark. The Cytoplasmic segment spans residues 313–561 (HQKYRKTLAD…EDSLEDNDVV (249 aa)). 4 disordered regions span residues 359–385 (AIRRQSTAASRHASASKTAAGASSYSS), 404–448 (ASFR…SATH), 479–503 (NGLSDAGKKTTVANGTPGNHKSKSA), and 539–561 (SFTDDGSVGTVVDEDSLEDNDVV). Over residues 371–385 (ASASKTAAGASSYSS) the composition is skewed to low complexity. The segment covering 550–561 (VDEDSLEDNDVV) has biased composition (acidic residues).

This sequence belongs to the G-protein coupled receptor 1 family. Opsin subfamily. Expressed in retina and brain. Expressed in a subset of retinal horizontal cells as well as a small number of amacrine and retinal ganglion cells. Also expressed in a small population of neurons in the suprachiasmatic nucleus (SNC).

The protein localises to the cell membrane. In terms of biological role, photoreceptor implicated in non-image-forming responses to light. The polypeptide is Melanopsin-A (opn4a) (Gadus morhua (Atlantic cod)).